Here is a 419-residue protein sequence, read N- to C-terminus: Ubiquitin receptor RAD23c (419 aa).

The Ubiquitin-like domain occupies 1-79 (MKIFVKTLKG…IVIMMNKSKP (79 aa)). Residues 83–118 (AASSASAGTSQAKSIPPSTSQPSISPQTPASVSAPV) show a composition bias toward low complexity. The tract at residues 83–172 (AASSASAGTS…DSAPVGSQGD (90 aa)) is disordered. Positions 119 to 135 (APAPTRPPPPAPTPTPA) are enriched in pro residues. Residues 136–146 (PVAATETVTTP) are compositionally biased toward low complexity. The UBA 1 domain maps to 185-228 (SNLESTIQQILDMGGGTWDRETVVLALRAAFNNPERAVEYLYTG). Residues 235–282 (VPPVARPPASAGQPANPPAQTQQPAAAPASGPNANPLDLFPQGLPNVG) are disordered. The span at 245-270 (AGQPANPPAQTQQPAAAPASGPNANP) shows a compositional bias: low complexity. An STI1 domain is found at 288-331 (GTLDFLRNSQQFQALRAMVQANPQVLQPMLQELGKQNPNLMRLI). A UBA 2 domain is found at 372-413 (THEEREAIERLEAMGFERALVLEVFFACNKNEELAANYLLDH).

The protein belongs to the RAD23 family. In terms of assembly, interacts with 'Lys-48'-linked polyubiquitin chains via its both UBA domains. Interacts with RPN10 via its ubiquitin-like domain. Widely expressed in the whole plant.

Its subcellular location is the nucleus. It localises to the cytoplasm. In terms of biological role, may be involved in nucleotide excision repair. Binds and presumably selects ubiquitin-conjugates for destruction. Prefers multiubiquitin chains rather than single ubiquitins, with a binding affinity for 'Lys-48'-linked ubiquitin chains. Acts as a ubiquitin receptor that associates with the 26S proteasomal docking subunit RPN10 for the indirect recognition of ubiquitinated substrates of ubiquitin/26S proteasome-mediated proteolysis (UPP). Involved in UV tolerance in hypocotyls, specifically in dark conditions. In Arabidopsis thaliana (Mouse-ear cress), this protein is Ubiquitin receptor RAD23c.